A 461-amino-acid chain; its full sequence is Chromosomal replication initiator protein DnaA (461 aa).

Residues 1 to 87 (MAVSLWQQCI…IGSRPSAKPV (87 aa)) are domain I, interacts with DnaA modulators. A domain II region spans residues 87–124 (VVQATAAIRPKPAASKAVEKPTFNAPQAEPAITANHRS). Positions 125 to 341 (NINPTYQFDN…GALNRVIANA (217 aa)) are domain III, AAA+ region. Residues glycine 169, glycine 171, lysine 172, and threonine 173 each coordinate ATP. The tract at residues 342 to 461 (NFTGRPITID…YANLIRTLSS (120 aa)) is domain IV, binds dsDNA.

The protein belongs to the DnaA family. As to quaternary structure, oligomerizes as a right-handed, spiral filament on DNA at oriC.

The protein localises to the cytoplasm. In terms of biological role, plays an essential role in the initiation and regulation of chromosomal replication. ATP-DnaA binds to the origin of replication (oriC) to initiate formation of the DNA replication initiation complex once per cell cycle. Binds the DnaA box (a 9 base pair repeat at the origin) and separates the double-stranded (ds)DNA. Forms a right-handed helical filament on oriC DNA; dsDNA binds to the exterior of the filament while single-stranded (ss)DNA is stabiized in the filament's interior. The ATP-DnaA-oriC complex binds and stabilizes one strand of the AT-rich DNA unwinding element (DUE), permitting loading of DNA polymerase. After initiation quickly degrades to an ADP-DnaA complex that is not apt for DNA replication. Binds acidic phospholipids. The protein is Chromosomal replication initiator protein DnaA of Shewanella piezotolerans (strain WP3 / JCM 13877).